The following is a 260-amino-acid chain: Lipid II isoglutaminyl synthase (glutamine-hydrolyzing) subunit GatD (260 aa).

Positions 16–214 (QLNIAHLYGN…FHGPILSRNA (199 aa)) constitute a GATase cobBQ-type domain. Residue cysteine 107 is the Nucleophile of the active site. Arginine 142 contributes to the substrate binding site. The active site involves histidine 206.

Belongs to the CobB/CobQ family. GatD subfamily. In terms of assembly, forms a heterodimer with MurT.

It catalyses the reaction beta-D-GlcNAc-(1-&gt;4)-Mur2Ac(oyl-L-Ala-gamma-D-Glu-L-Lys-D-Ala-D-Ala)-di-trans,octa-cis-undecaprenyl diphosphate + L-glutamine + ATP + H2O = beta-D-GlcNAc-(1-&gt;4)-Mur2Ac(oyl-L-Ala-D-isoglutaminyl-L-Lys-D-Ala-D-Ala)-di-trans,octa-cis-undecaprenyl diphosphate + L-glutamate + ADP + phosphate + H(+). It carries out the reaction L-glutamine + H2O = L-glutamate + NH4(+). The protein operates within cell wall biogenesis; peptidoglycan biosynthesis. Its function is as follows. The lipid II isoglutaminyl synthase complex catalyzes the formation of alpha-D-isoglutamine in the cell wall lipid II stem peptide. The GatD subunit catalyzes the hydrolysis of glutamine to glutamate and ammonia. The resulting ammonia molecule is channeled to the active site of MurT. The protein is Lipid II isoglutaminyl synthase (glutamine-hydrolyzing) subunit GatD of Streptococcus pneumoniae (strain ATCC BAA-255 / R6).